The sequence spans 691 residues: Putative calcium up-regulated protein I (691 aa).

The 128-residue stretch at Ser-47–Asn-174 folds into the Ricin B-type lectin domain.

Belongs to the cup family.

This Dictyostelium discoideum (Social amoeba) protein is Putative calcium up-regulated protein I (cupI).